The primary structure comprises 445 residues: Phosphoglucosamine mutase (445 aa).

Serine 99 serves as the catalytic Phosphoserine intermediate. Residues serine 99, aspartate 242, aspartate 244, and aspartate 246 each contribute to the Mg(2+) site. Serine 99 bears the Phosphoserine mark.

It belongs to the phosphohexose mutase family. Requires Mg(2+) as cofactor. Post-translationally, activated by phosphorylation.

It carries out the reaction alpha-D-glucosamine 1-phosphate = D-glucosamine 6-phosphate. In terms of biological role, catalyzes the conversion of glucosamine-6-phosphate to glucosamine-1-phosphate. The chain is Phosphoglucosamine mutase from Campylobacter jejuni subsp. jejuni serotype O:2 (strain ATCC 700819 / NCTC 11168).